The sequence spans 159 residues: Lipoprotein signal peptidase (159 aa).

2 helical membrane passes run 59 to 79 and 87 to 107; these read PMIL…YVVF and FLIT…DRIL. Catalysis depends on residues Asp-113 and Asp-139. Residues 131–151 traverse the membrane as a helical segment; the sequence is LWPVFNIADSAITIGACVLVI.

It belongs to the peptidase A8 family.

The protein localises to the cell inner membrane. The enzyme catalyses Release of signal peptides from bacterial membrane prolipoproteins. Hydrolyzes -Xaa-Yaa-Zaa-|-(S,diacylglyceryl)Cys-, in which Xaa is hydrophobic (preferably Leu), and Yaa (Ala or Ser) and Zaa (Gly or Ala) have small, neutral side chains.. The protein operates within protein modification; lipoprotein biosynthesis (signal peptide cleavage). This protein specifically catalyzes the removal of signal peptides from prolipoproteins. The polypeptide is Lipoprotein signal peptidase (Chlorobium phaeobacteroides (strain BS1)).